The chain runs to 117 residues: Acylphosphatase (117 aa).

In terms of domain architecture, Acylphosphatase-like spans 31–117 (RWRWIIQGQV…RGDDWFEVRY (87 aa)). Catalysis depends on residues arginine 46 and asparagine 64.

The protein belongs to the acylphosphatase family.

It carries out the reaction an acyl phosphate + H2O = a carboxylate + phosphate + H(+). The polypeptide is Acylphosphatase (acyP) (Synechococcus sp. (strain CC9902)).